Consider the following 575-residue polypeptide: Alpha-(1,6)-fucosyltransferase (575 aa).

Over 1-9 (MRPWTGSWR) the chain is Cytoplasmic. Residues 10 to 30 (WIMLILFAWGTLLFYIGGHLV) traverse the membrane as a helical; Signal-anchor for type II membrane protein segment. The Lumenal portion of the chain corresponds to 31-575 (RDNDHSDHSS…KYPTYPEADK (545 aa)). 3 disulfides stabilise this stretch: Cys204/Cys266, Cys212/Cys230, and Cys218/Cys222. Residues 206–493 (KAKKLVCNIN…PDASANFRSL (288 aa)) form the GT23 domain. Phosphoserine is present on Ser278. The SH3-binding motif lies at 299 to 305 (PRPPYLP). The segment at 365 to 366 (RR) is important for donor substrate binding. Residues Cys465 and Cys472 are joined by a disulfide bond. Residues 502-563 (PNAHNQIAIY…PSYKVREKIE (62 aa)) enclose the SH3 domain.

Belongs to the glycosyltransferase 23 family. Post-translationally, tyrosine phosphorylated by PKDCC/VLK. In terms of tissue distribution, highest expression in brain.

The protein localises to the golgi apparatus. The protein resides in the golgi stack membrane. The catalysed reaction is N(4)-{beta-D-GlcNAc-(1-&gt;2)-alpha-D-Man-(1-&gt;3)-[beta-D-GlcNAc-(1-&gt;2)-alpha-D-Man-(1-&gt;6)]-beta-D-Man-(1-&gt;4)-beta-D-GlcNAc-(1-&gt;4)-beta-D-GlcNAc}-L-asparaginyl-[protein] + GDP-beta-L-fucose = an N(4)-{beta-D-GlcNAc-(1-&gt;2)-alpha-D-Man-(1-&gt;3)-[beta-D-GlcNAc-(1-&gt;2)-alpha-D-Man-(1-&gt;6)]-beta-D-Man-(1-&gt;4)-beta-D-GlcNAc-(1-&gt;4)-[alpha-L-Fuc-(1-&gt;6)]-beta-D-GlcNAc}-L-asparaginyl-[protein] + GDP + H(+). It participates in protein modification; protein glycosylation. In terms of biological role, catalyzes the addition of fucose in alpha 1-6 linkage to the first GlcNAc residue, next to the peptide chains in N-glycans. This is Alpha-(1,6)-fucosyltransferase (FUT8) from Sus scrofa (Pig).